A 147-amino-acid chain; its full sequence is Large ribosomal subunit protein uL13 (147 aa).

The protein belongs to the universal ribosomal protein uL13 family. As to quaternary structure, part of the 50S ribosomal subunit.

In terms of biological role, this protein is one of the early assembly proteins of the 50S ribosomal subunit, although it is not seen to bind rRNA by itself. It is important during the early stages of 50S assembly. The chain is Large ribosomal subunit protein uL13 from Paenarthrobacter aurescens (strain TC1).